Consider the following 286-residue polypeptide: Release factor glutamine methyltransferase (286 aa).

Residues 121–125, D144, W172, and N188 each bind S-adenosyl-L-methionine; that span reads GTGTG. Position 188–191 (188–191) interacts with substrate; sequence NPPY.

This sequence belongs to the protein N5-glutamine methyltransferase family. PrmC subfamily.

The catalysed reaction is L-glutaminyl-[peptide chain release factor] + S-adenosyl-L-methionine = N(5)-methyl-L-glutaminyl-[peptide chain release factor] + S-adenosyl-L-homocysteine + H(+). Functionally, methylates the class 1 translation termination release factors RF1/PrfA and RF2/PrfB on the glutamine residue of the universally conserved GGQ motif. This is Release factor glutamine methyltransferase from Vibrio cholerae serotype O1 (strain ATCC 39315 / El Tor Inaba N16961).